The sequence spans 123 residues: Thioredoxin domain-containing protein 17 (123 aa).

The Thioredoxin domain maps to 41–123 (SWCPDCVKAE…DLVRMMFTED (83 aa)). Residues C43 and C46 each act as nucleophile in the active site. C43 and C46 are disulfide-bonded.

The protein belongs to the thioredoxin family.

Its subcellular location is the cytoplasm. In terms of biological role, disulfide reductase. May participate in various redox reactions through the reversible oxidation of its active center dithiol to a disulfide and catalyze dithiol-disulfide exchange reactions. Has peroxidase activity and may contribute to the elimination of cellular hydrogen peroxide. This chain is Thioredoxin domain-containing protein 17 (txndc17), found in Danio rerio (Zebrafish).